The sequence spans 426 residues: Serine/threonine-protein kinase ssn3 (426 aa).

The region spanning 41-368 (YHIVGFISSG…AQEALEHPYF (328 aa)) is the Protein kinase domain. ATP is bound by residues 47 to 55 (ISSGTYGRV) and Lys-71. Residue Asp-173 is the Proton acceptor of the active site. The segment at 390 to 426 (RVTQDDNDIRSGSLPGTKRSGLPDDSLMGRAAKRLKE) is disordered.

The protein belongs to the protein kinase superfamily. CMGC Ser/Thr protein kinase family. CDC2/CDKX subfamily. As to quaternary structure, component of the srb8-11 complex, a regulatory module of the Mediator complex. Mg(2+) serves as cofactor.

It localises to the nucleus. It carries out the reaction L-seryl-[protein] + ATP = O-phospho-L-seryl-[protein] + ADP + H(+). The catalysed reaction is L-threonyl-[protein] + ATP = O-phospho-L-threonyl-[protein] + ADP + H(+). The enzyme catalyses [DNA-directed RNA polymerase] + ATP = phospho-[DNA-directed RNA polymerase] + ADP + H(+). In terms of biological role, component of the srb8-11 complex. The srb8-11 complex is a regulatory module of the Mediator complex which is itself involved in regulation of basal and activated RNA polymerase II-dependent transcription. The srb8-11 complex may be involved in the transcriptional repression of a subset of genes regulated by Mediator. It may inhibit the association of the Mediator complex with RNA polymerase II to form the holoenzyme complex. The srb8-11 complex phosphorylates the C-terminal domain (CTD) of the largest subunit of RNA polymerase II. This chain is Serine/threonine-protein kinase ssn3 (ssn3), found in Aspergillus clavatus (strain ATCC 1007 / CBS 513.65 / DSM 816 / NCTC 3887 / NRRL 1 / QM 1276 / 107).